Consider the following 90-residue polypeptide: Small ribosomal subunit protein bS20 (90 aa).

It belongs to the bacterial ribosomal protein bS20 family.

In terms of biological role, binds directly to 16S ribosomal RNA. This is Small ribosomal subunit protein bS20 from Mesomycoplasma hyopneumoniae (strain 232) (Mycoplasma hyopneumoniae).